A 1048-amino-acid polypeptide reads, in one-letter code: Putative helicase/primase complex protein (1048 aa).

The interval 1025–1048 (STKEESSPTREETSSIKEKTFTET) is disordered.

It belongs to the asfivirus F1055L family.

In terms of biological role, may be involved in DNA replication. The sequence is that of Putative helicase/primase complex protein from African swine fever virus (isolate Pig/Kenya/KEN-50/1950) (ASFV).